We begin with the raw amino-acid sequence, 220 residues long: Superoxide dismutase [Fe] (220 aa).

Fe cation is bound by residues histidine 26, histidine 73, aspartate 164, and histidine 168.

This sequence belongs to the iron/manganese superoxide dismutase family. As to quaternary structure, homodimer. The cofactor is Fe cation.

It carries out the reaction 2 superoxide + 2 H(+) = H2O2 + O2. Functionally, destroys superoxide anion radicals which are normally produced within the cells and which are toxic to biological systems. The protein is Superoxide dismutase [Fe] (sodB) of Campylobacter jejuni subsp. jejuni serotype O:2 (strain ATCC 700819 / NCTC 11168).